A 389-amino-acid chain; its full sequence is MLLILAQWLQDDFGFFRVFNYITFRAVMATVTALLIGLAAGPWVIRKLSELKMGQAVRTDGPLTHLVKSGTPTMGGVLILIGIFVSCMLWADLSNRFIWIVMIVTFGFGAVGWVDDYRKVVRKDPKGMASREKFFWQTLIGLFAAIYLAFSVSEINNLKVLELFFEWVKSGFALDLPAKTNLLLPFMKEVSYPLGMMGFIILSYLVIVGSSNAVNLTDGLDGLVIMPVILVGAALGAFAYVMGNAIYAKYLLFPYIPGAGELMIFCGAMGGAGLAFLWYNTHPAQVFMGDVGALALGGALGTIAVIVRQEIVLFVMGGIFVAETVSVMMQVVWFKITKKHFGEGRRIFRMAPLHHHFELGGWKETQVVVRFWIITILLVLIGLSSLKLR.

The next 10 helical transmembrane spans lie at 25–45 (RAVMATVTALLIGLAAGPWVI), 73–93 (TMGGVLILIGIFVSCMLWADL), 97–117 (FIWIVMIVTFGFGAVGWVDDY), 135–155 (FWQTLIGLFAAIYLAFSVSEI), 190–210 (VSYPLGMMGFIILSYLVIVGS), 222–242 (GLVIMPVILVGAALGAFAYVM), 258–278 (GAGELMIFCGAMGGAGLAFLW), 286–306 (VFMGDVGALALGGALGTIAVI), 311–331 (IVLFVMGGIFVAETVSVMMQV), and 366–386 (QVVVRFWIITILLVLIGLSSL).

The protein belongs to the glycosyltransferase 4 family. MraY subfamily. It depends on Mg(2+) as a cofactor.

Its subcellular location is the cell inner membrane. It catalyses the reaction UDP-N-acetyl-alpha-D-muramoyl-L-alanyl-gamma-D-glutamyl-meso-2,6-diaminopimeloyl-D-alanyl-D-alanine + di-trans,octa-cis-undecaprenyl phosphate = di-trans,octa-cis-undecaprenyl diphospho-N-acetyl-alpha-D-muramoyl-L-alanyl-D-glutamyl-meso-2,6-diaminopimeloyl-D-alanyl-D-alanine + UMP. Its pathway is cell wall biogenesis; peptidoglycan biosynthesis. Catalyzes the initial step of the lipid cycle reactions in the biosynthesis of the cell wall peptidoglycan: transfers peptidoglycan precursor phospho-MurNAc-pentapeptide from UDP-MurNAc-pentapeptide onto the lipid carrier undecaprenyl phosphate, yielding undecaprenyl-pyrophosphoryl-MurNAc-pentapeptide, known as lipid I. This chain is Phospho-N-acetylmuramoyl-pentapeptide-transferase, found in Polynucleobacter asymbioticus (strain DSM 18221 / CIP 109841 / QLW-P1DMWA-1) (Polynucleobacter necessarius subsp. asymbioticus).